Reading from the N-terminus, the 196-residue chain is ATP-dependent Clp protease proteolytic subunit (196 aa).

Catalysis depends on Ser96, which acts as the Nucleophile. The active site involves His121.

It belongs to the peptidase S14 family. Fourteen ClpP subunits assemble into 2 heptameric rings which stack back to back to give a disk-like structure with a central cavity, resembling the structure of eukaryotic proteasomes.

The protein localises to the cytoplasm. The catalysed reaction is Hydrolysis of proteins to small peptides in the presence of ATP and magnesium. alpha-casein is the usual test substrate. In the absence of ATP, only oligopeptides shorter than five residues are hydrolyzed (such as succinyl-Leu-Tyr-|-NHMec, and Leu-Tyr-Leu-|-Tyr-Trp, in which cleavage of the -Tyr-|-Leu- and -Tyr-|-Trp bonds also occurs).. In terms of biological role, cleaves peptides in various proteins in a process that requires ATP hydrolysis. Has a chymotrypsin-like activity. Plays a major role in the degradation of misfolded proteins. The protein is ATP-dependent Clp protease proteolytic subunit of Streptococcus gordonii (strain Challis / ATCC 35105 / BCRC 15272 / CH1 / DL1 / V288).